Consider the following 346-residue polypeptide: tRNA-specific 2-thiouridylase MnmA (346 aa).

6 to 13 (AMSGGTDS) is an ATP binding site. Residue C90 is the Nucleophile of the active site. The cysteines at positions 90 and 187 are disulfide-linked. G114 contacts ATP. The interaction with tRNA stretch occupies residues 137–139 (KDQ). C187 (cysteine persulfide intermediate) is an active-site residue. The interval 292-293 (RY) is interaction with tRNA.

Belongs to the MnmA/TRMU family.

The protein resides in the cytoplasm. The enzyme catalyses S-sulfanyl-L-cysteinyl-[protein] + uridine(34) in tRNA + AH2 + ATP = 2-thiouridine(34) in tRNA + L-cysteinyl-[protein] + A + AMP + diphosphate + H(+). Catalyzes the 2-thiolation of uridine at the wobble position (U34) of tRNA, leading to the formation of s(2)U34. This is tRNA-specific 2-thiouridylase MnmA from Nitratidesulfovibrio vulgaris (strain DP4) (Desulfovibrio vulgaris).